Consider the following 332-residue polypeptide: DNA-directed RNA polymerase subunit alpha (332 aa).

The tract at residues 1–234 (MIEYVIPKKL…NHLQIITDSL (234 aa)) is alpha N-terminal domain (alpha-NTD). An alpha C-terminal domain (alpha-CTD) region spans residues 264–332 (AVYSKKIDEL…KFGLSLKKGG (69 aa)).

This sequence belongs to the RNA polymerase alpha chain family. As to quaternary structure, homodimer. The RNAP catalytic core consists of 2 alpha, 1 beta, 1 beta' and 1 omega subunit. When a sigma factor is associated with the core the holoenzyme is formed, which can initiate transcription.

It catalyses the reaction RNA(n) + a ribonucleoside 5'-triphosphate = RNA(n+1) + diphosphate. In terms of biological role, DNA-dependent RNA polymerase catalyzes the transcription of DNA into RNA using the four ribonucleoside triphosphates as substrates. This chain is DNA-directed RNA polymerase subunit alpha, found in Pseudothermotoga lettingae (strain ATCC BAA-301 / DSM 14385 / NBRC 107922 / TMO) (Thermotoga lettingae).